The primary structure comprises 335 residues: F420-dependent glucose-6-phosphate dehydrogenase 1 (335 aa).

Position 38 (Asp-38) interacts with coenzyme F420-(gamma-Glu)n. Catalysis depends on His-39, which acts as the Proton donor. Coenzyme F420-(gamma-Glu)n-binding positions include Thr-75 and 106-107 (TG). Glu-108 functions as the Proton acceptor in the catalytic mechanism. Coenzyme F420-(gamma-Glu)n is bound by residues Asn-111, 176-177 (GG), and 179-180 (VV). Substrate contacts are provided by Thr-194, Lys-197, Lys-258, and Arg-282.

The protein belongs to the F420-dependent glucose-6-phosphate dehydrogenase family. As to quaternary structure, homodimer.

It carries out the reaction oxidized coenzyme F420-(gamma-L-Glu)(n) + D-glucose 6-phosphate + H(+) = 6-phospho-D-glucono-1,5-lactone + reduced coenzyme F420-(gamma-L-Glu)(n). In terms of biological role, catalyzes the coenzyme F420-dependent oxidation of glucose 6-phosphate (G6P) to 6-phosphogluconolactone. In Rhodococcus jostii (strain RHA1), this protein is F420-dependent glucose-6-phosphate dehydrogenase 1.